The following is an 83-amino-acid chain: U-actitoxin-Avd8d (83 aa).

The N-terminal stretch at 1 to 19 is a signal peptide; sequence MASTRLFVLLVIGTVLLCQ. Positions 20–38 are excised as a propeptide; the sequence is VSGFLDELLAEHELPQDMT.

Belongs to the sea anemone 8 toxin family.

It is found in the secreted. It localises to the nematocyst. In Anemonia viridis (Snakelocks anemone), this protein is U-actitoxin-Avd8d.